Reading from the N-terminus, the 5154-residue chain is Hydrocephalus-inducing protein (5154 aa).

An interaction with KIF9 region spans residues 409-800; that stretch reads MILEDSVLDP…VLLSSPSPCG (392 aa). Residues 997–1009 show a composition bias toward basic and acidic residues; that stretch reads RPKEKQSKKEPGK. Disordered regions lie at residues 997 to 1033, 1966 to 1988, 2193 to 2222, 2383 to 2423, 2521 to 2572, and 2706 to 2762; these read RPKE…GNPV, ENEE…TSIS, ADSH…SPLL, KLQQ…QGAT, HTGT…KAER, and KAQE…DIDQ. Positions 1010 to 1024 are enriched in low complexity; the sequence is KGSTSSSRRQSKASQ. A coiled-coil region spans residues 1948–1977; the sequence is EMKKSKEEHMKAKYMENLENEEEEMNTSDQ. Composition is skewed to polar residues over residues 1974–1988 and 2209–2220; these read TSDQ…TSIS and SETPQVQISSSP. A coiled-coil region spans residues 2308–2444; that stretch reads YVVMKAQEKA…LKMESIERKV (137 aa). 4 stretches are compositionally biased toward basic and acidic residues: residues 2383-2398, 2523-2535, 2548-2572, and 2721-2734; these read KLQQ…DELK, GTDE…DDQR, KDRE…KAER, and KLKD…ETQK. Residues 2543-2588 are a coiled coil; that stretch reads GRKGRKDRERERLEKERAEKERLEREKAERERLEKLKALEERSDVE.

In terms of assembly, interacts with KIF9. Expressed in brain and testis. Expressed in ciliated epithelial cells lining bronchi and oviduct, and in spermatocytes.

Its subcellular location is the cell projection. The protein resides in the cilium. It localises to the cytoplasm. It is found in the cytoskeleton. The protein localises to the cilium axoneme. Its subcellular location is the flagellum. Functionally, required for ciliary motility. The sequence is that of Hydrocephalus-inducing protein (Hydin) from Mus musculus (Mouse).